The primary structure comprises 454 residues: Cobyrinate a,c-diamide synthase (454 aa).

Residues 247–442 form the GATase cobBQ-type domain; that stretch reads KIGIAMDSAF…IHAHWASNPN (196 aa). The active-site Nucleophile is the Cys329.

The protein belongs to the CobB/CbiA family. Mg(2+) serves as cofactor.

The enzyme catalyses cob(II)yrinate + 2 L-glutamine + 2 ATP + 2 H2O = cob(II)yrinate a,c diamide + 2 L-glutamate + 2 ADP + 2 phosphate + 2 H(+). It participates in cofactor biosynthesis; adenosylcobalamin biosynthesis; cob(II)yrinate a,c-diamide from sirohydrochlorin (anaerobic route): step 10/10. In terms of biological role, catalyzes the ATP-dependent amidation of the two carboxylate groups at positions a and c of cobyrinate, using either L-glutamine or ammonia as the nitrogen source. In Leptospira interrogans serogroup Icterohaemorrhagiae serovar Lai (strain 56601), this protein is Cobyrinate a,c-diamide synthase.